The primary structure comprises 203 residues: Histidine biosynthesis bifunctional protein HisIE (203 aa).

Positions 1–114 (MLTEQQRREL…FGDASHQWLF (114 aa)) are phosphoribosyl-AMP cyclohydrolase. A phosphoribosyl-ATP pyrophosphohydrolase region spans residues 115–203 (LYQLEQLLAE…VIDDLRKRHQ (89 aa)).

It in the N-terminal section; belongs to the PRA-CH family. This sequence in the C-terminal section; belongs to the PRA-PH family.

Its subcellular location is the cytoplasm. It carries out the reaction 1-(5-phospho-beta-D-ribosyl)-ATP + H2O = 1-(5-phospho-beta-D-ribosyl)-5'-AMP + diphosphate + H(+). The catalysed reaction is 1-(5-phospho-beta-D-ribosyl)-5'-AMP + H2O = 1-(5-phospho-beta-D-ribosyl)-5-[(5-phospho-beta-D-ribosylamino)methylideneamino]imidazole-4-carboxamide. It participates in amino-acid biosynthesis; L-histidine biosynthesis; L-histidine from 5-phospho-alpha-D-ribose 1-diphosphate: step 2/9. Its pathway is amino-acid biosynthesis; L-histidine biosynthesis; L-histidine from 5-phospho-alpha-D-ribose 1-diphosphate: step 3/9. This Salmonella typhi protein is Histidine biosynthesis bifunctional protein HisIE (hisI).